Consider the following 583-residue polypeptide: MKRSMYAGRVRSEHIGTSITLKGWVGRRRDLGGLIFIDLRDREGIMQLVINPEEVAASVMATAESLRSEFVIEVSGVVTAREQANDNLPTGEVELKVQELSVLNTSKTTPFEIKDGIEANDDTRMRYRYLDLRRPEMLENFKLRAKVTHSIRNYLDNLEFIDVETPMLTKSTPEGARDYLVPSRVNQGHFYALPQSPQITKQLLMNAGFDRYYQIVKCFRDEDLRGDRQPEFTQVDLETSFLSDQEIQDIVEGMIAKVMKDTKGLEVSLPFPRMAYDDAMNNYGSDKPDTRFDMLLQDLTEIVKEVDFKVFSEASVVKAIVVKDKADKYSRKNIDKLTEIAKQYGAKGLAWLKYVDNTISGPVAKFLTAIEGRLTEALQLENNDLILFVADSLEVANETLGALRTRIAKELELIDYSKFNFLWVVDWPMFEWSEEEGRYMSAHHPFTLPTAETAHELEGDLAKVRAVAYDIVLNGYELGGGSLRINQKDTQERMFKALGFSAESAQEQFGFLLEAMDYGFPPHGGLAIGLDRFVMLLAGKDNIREVIAFPKNNKASDPMTQAPSLVSEQQLEELSLTVESYEN.

Glu174 serves as a coordination point for L-aspartate. Residues Gln198–Lys201 form an aspartate region. Residue Arg220 participates in L-aspartate binding. Residues Arg220 to Glu222 and Gln229 each bind ATP. His443 serves as a coordination point for L-aspartate. Glu477 is an ATP binding site. Arg484 lines the L-aspartate pocket. Gly529 to Arg532 lines the ATP pocket.

It belongs to the class-II aminoacyl-tRNA synthetase family. Type 1 subfamily. Homodimer.

It localises to the cytoplasm. The enzyme catalyses tRNA(Asp) + L-aspartate + ATP = L-aspartyl-tRNA(Asp) + AMP + diphosphate. Its function is as follows. Catalyzes the attachment of L-aspartate to tRNA(Asp) in a two-step reaction: L-aspartate is first activated by ATP to form Asp-AMP and then transferred to the acceptor end of tRNA(Asp). This is Aspartate--tRNA ligase from Streptococcus agalactiae serotype III (strain NEM316).